Reading from the N-terminus, the 180-residue chain is MTLKELVVGFGTQIRSICMVGSNAFKKRETRMYPEEPVNPPPRYRGRIVLTRDPDGEERCVACNLCAVACPVGCISLQKAETKDGRWYPEFFRVNFSRCIFCGFCEEACPTTAIQLTPDFEMGEYKRQDLVYEKEDLLISGPGKYPEYNFYRMAGMAIDGKDKGEAENEAKPIDVKGLLP.

2 consecutive 4Fe-4S ferredoxin-type domains span residues Leu50–Ala80 and Glu90–Asp119. Positions 60, 63, 66, 70, 99, 102, 105, and 109 each coordinate [4Fe-4S] cluster.

It belongs to the complex I 23 kDa subunit family. In terms of assembly, NDH-1 is composed of 13 different subunits. Subunits NuoA, H, J, K, L, M, N constitute the membrane sector of the complex. [4Fe-4S] cluster is required as a cofactor.

It localises to the cell inner membrane. It catalyses the reaction a quinone + NADH + 5 H(+)(in) = a quinol + NAD(+) + 4 H(+)(out). NDH-1 shuttles electrons from NADH, via FMN and iron-sulfur (Fe-S) centers, to quinones in the respiratory chain. The immediate electron acceptor for the enzyme in this species is believed to be ubiquinone. Couples the redox reaction to proton translocation (for every two electrons transferred, four hydrogen ions are translocated across the cytoplasmic membrane), and thus conserves the redox energy in a proton gradient. The chain is NADH-quinone oxidoreductase subunit I from Pectobacterium atrosepticum (strain SCRI 1043 / ATCC BAA-672) (Erwinia carotovora subsp. atroseptica).